A 21-amino-acid polypeptide reads, in one-letter code: Azemiopsin (21 aa).

Residues 1–14 (DNWWPKPPHQGPRP) show a composition bias toward pro residues. A disordered region spans residues 1–21 (DNWWPKPPHQGPRPPRPRPKP). Implicated in receptor binding stretches follow at residues 3 to 6 (WWPK), 8 to 11 (PHQG), and 13 to 14 (RP).

In terms of assembly, monomer. In terms of tissue distribution, expressed by the venom gland.

Its subcellular location is the secreted. In terms of biological role, in vitro, reversibly blocks human muscle-type nicotinic acetylcholine receptors (nAChR) alpha-1-beta-1-epsilon-delta/CHRNA1-CHRNB1-CHRNE-CHRND (EC(50)=0.44 uM) and alpha-1-beta-1-gamma-delta/CHRNA1-CHRNB1-CHRNG-CHRND (EC(50)=1.56 uM). Binds to nAChR from T.californica (IC(50)=0.03-0.18 uM), human neuronal nAChR alpha-7/CHRNA7 (IC(50)=22 uM) and acetylcholine-binding proteins (AChBP) from L.stagnalis (IC(50)=63 uM) and A.californica (IC(50)=230 uM). The polypeptide is Azemiopsin (Azemiops feae (Fea's viper)).